Reading from the N-terminus, the 300-residue chain is Kynurenine formamidase (300 aa).

The HGGXW signature appears at 86–90 (HGGYW). Ser-157 (nucleophile) is an active-site residue. Residues Asp-244 and His-276 contribute to the active site.

This sequence belongs to the kynurenine formamidase family. Homodimer.

The enzyme catalyses N-formyl-L-kynurenine + H2O = L-kynurenine + formate + H(+). Its pathway is amino-acid degradation; L-tryptophan degradation via kynurenine pathway; L-kynurenine from L-tryptophan: step 2/2. Catalyzes the hydrolysis of N-formyl-L-kynurenine to L-kynurenine, the second step in the kynurenine pathway of tryptophan degradation. Required for elimination of toxic metabolites. The protein is Kynurenine formamidase (KFase) of Drosophila melanogaster (Fruit fly).